The primary structure comprises 201 residues: ATP-dependent Clp protease proteolytic subunit (201 aa).

S105 functions as the Nucleophile in the catalytic mechanism. Residue H130 is part of the active site.

Belongs to the peptidase S14 family. In terms of assembly, fourteen ClpP subunits assemble into 2 heptameric rings which stack back to back to give a disk-like structure with a central cavity, resembling the structure of eukaryotic proteasomes.

It localises to the cytoplasm. The catalysed reaction is Hydrolysis of proteins to small peptides in the presence of ATP and magnesium. alpha-casein is the usual test substrate. In the absence of ATP, only oligopeptides shorter than five residues are hydrolyzed (such as succinyl-Leu-Tyr-|-NHMec, and Leu-Tyr-Leu-|-Tyr-Trp, in which cleavage of the -Tyr-|-Leu- and -Tyr-|-Trp bonds also occurs).. In terms of biological role, cleaves peptides in various proteins in a process that requires ATP hydrolysis. Has a chymotrypsin-like activity. Plays a major role in the degradation of misfolded proteins. The chain is ATP-dependent Clp protease proteolytic subunit from Acinetobacter baylyi (strain ATCC 33305 / BD413 / ADP1).